Consider the following 152-residue polypeptide: Ribosome maturation factor RimP (152 aa).

It belongs to the RimP family.

The protein localises to the cytoplasm. In terms of biological role, required for maturation of 30S ribosomal subunits. The sequence is that of Ribosome maturation factor RimP from Alteromonas mediterranea (strain DSM 17117 / CIP 110805 / LMG 28347 / Deep ecotype).